A 352-amino-acid polypeptide reads, in one-letter code: MRPLNVQIRLGNLRHNYRILKEMHGGKLLAVVKADAYGHGAVRCAFALADLADGFAVATIDEGIRLRESGITHPIVLLEGVFEASEYEAVEQYSLWPAVGNQWQLEALLSRHWKKPVKVWLKMDSGMHRTGFFPHDYTSAYAALKQSEYVDSIVKFSHFSCADEPESGMTEIQMEAFDLGTKGLEGEESLANSAAILNIPEARRDWGRAGLALYGISPFGGSDDRLKPVMRLSTRIFGERVLQPHSPIGYGATFYTSKSTRVGLIACGYADGYPRRAPSNSPVAVDGKLTRVIGRISMDMMTIELDASQEGLGHEVELWGDTVNINTVAEAAGTIPYELMCNIKRAKFTYIE.

Lys-33 functions as the Proton acceptor; specific for D-alanine in the catalytic mechanism. An N6-(pyridoxal phosphate)lysine modification is found at Lys-33. Arg-129 provides a ligand contact to substrate. The active-site Proton acceptor; specific for L-alanine is the Tyr-250. Residue Met-298 participates in substrate binding.

It belongs to the alanine racemase family. Pyridoxal 5'-phosphate serves as cofactor.

It catalyses the reaction L-alanine = D-alanine. It participates in amino-acid biosynthesis; D-alanine biosynthesis; D-alanine from L-alanine: step 1/1. Catalyzes the interconversion of L-alanine and D-alanine. May also act on other amino acids. In Neisseria gonorrhoeae (strain ATCC 700825 / FA 1090), this protein is Alanine racemase (alr).